The following is a 146-amino-acid chain: MPSQGKKYEYLEHTADIKFLAYGNTLKEVFENAALAMFNVIIDTGKVSGETAREVCLTSPDLESLLVDWLSELLYLFEVDEIVFWKFRVEEIREEEGEYSIKAVASGEQYYPESHPFETEIKAVTYNQLELEKTADGWKAQVVVDI.

Ca(2+) contacts are provided by aspartate 16, aspartate 145, and isoleucine 146.

Belongs to the archease family.

Activates the tRNA-splicing ligase complex by facilitating the enzymatic turnover of catalytic subunit RtcB. Acts by promoting the guanylylation of RtcB, a key intermediate step in tRNA ligation. Can also alter the NTP specificity of RtcB such that ATP, dGTP or ITP is used efficiently. The chain is Protein archease from Methanosarcina acetivorans (strain ATCC 35395 / DSM 2834 / JCM 12185 / C2A).